The sequence spans 322 residues: Peptidase 1 (322 aa).

The first 18 residues, methionine 1–alanine 18, serve as a signal peptide directing secretion. A propeptide spanning residues tyrosine 19 to glycine 99 is cleaved from the precursor. Cysteine 131 and cysteine 171 are joined by a disulfide. Cysteine 134 is a catalytic residue. Asparagine 152 carries an N-linked (GlcNAc...) asparagine glycan. Residues histidine 270 and asparagine 290 contribute to the active site.

It belongs to the peptidase C1 family. In terms of tissue distribution, expressed in the gut.

It is found in the secreted. The catalysed reaction is Broad endopeptidase specificity.. Its function is as follows. Probable thiol protease. This chain is Peptidase 1, found in Psoroptes ovis (Sheep scab mite).